Consider the following 153-residue polypeptide: NADH dehydrogenase [ubiquinone] 1 beta subcomplex subunit 11, mitochondrial (153 aa).

Residues 1–29 (MAAGLFGLSARLLLAAAATRGLPAARVRW) constitute a mitochondrion transit peptide. The tract at residues 40-77 (PSAVAGKRPPEPTTQWQEDPEPEDENLYEKNPDSHGYD) is disordered. Basic and acidic residues predominate over residues 66-77 (LYEKNPDSHGYD). Residues 89-109 (LVFFFGVSIILVLGSTFVAYL) form a helical membrane-spanning segment.

The protein belongs to the complex I NDUFB11 subunit family. As to quaternary structure, complex I is composed of 45 different subunits. Interacts with BCAP31.

It is found in the mitochondrion inner membrane. Accessory subunit of the mitochondrial membrane respiratory chain NADH dehydrogenase (Complex I), that is believed not to be involved in catalysis. Complex I functions in the transfer of electrons from NADH to the respiratory chain. The immediate electron acceptor for the enzyme is believed to be ubiquinone. This is NADH dehydrogenase [ubiquinone] 1 beta subcomplex subunit 11, mitochondrial (NDUFB11) from Pan troglodytes (Chimpanzee).